Here is a 497-residue protein sequence, read N- to C-terminus: MPPSTDSSRRNSEEGSSDGFKLDSSALNKPPEEVFDIVGKLGEGSYGSVHKAIHRESGHVLAIKKVPVDTDLQEIIKEISIMQQCKSKYVVKYYGSYFKHSDLWIVMEYCGAGSISDIMRARRKPLSEQEISAVLRDTLKGLQYLHDLKKIHRDIKAGNILLNTDGIAKLADFGVAGQLTDTMAKRNTVIGTPFWMAPEVIEEIGYDTKADIWSLGITAIEMAEGRPPYSDIHPMRAIFMIPTKPPPTFKKPEEWSSEFNDFIRSCLIKKPEERKTALRLCEHTFIKNAPGCDIMQLMIQDAQEKAILGQAPMAASSGNDATLLSEGMSTMIDGGESTLVQHKDNYVTAQSLRSQMESLRIGGEIPKSAYIPGSSKNGNSPRVQPPGHTASASDPSKNQPFAQDGTGPNFQLGTSESSYKDASYNMMNTEAEYENRFQRAVVDGDFEFLRNITLDELIRRKESLDSEMEEEIRELQRRYKTKRQPILDVIEIKKRLQ.

The segment at 1–27 (MPPSTDSSRRNSEEGSSDGFKLDSSAL) is disordered. The 252-residue stretch at 35–286 (FDIVGKLGEG…ALRLCEHTFI (252 aa)) folds into the Protein kinase domain. Residues 41–49 (LGEGSYGSV) and lysine 64 contribute to the ATP site. Aspartate 154 serves as the catalytic Proton acceptor. A disordered region spans residues 367-416 (KSAYIPGSSKNGNSPRVQPPGHTASASDPSKNQPFAQDGTGPNFQLGTSE). Residues 390–416 (ASASDPSKNQPFAQDGTGPNFQLGTSE) are compositionally biased toward polar residues. Residues 446–493 (FEFLRNITLDELIRRKESLDSEMEEEIRELQRRYKTKRQPILDVIEIK) form the SARAH domain. Positions 450 to 486 (RNITLDELIRRKESLDSEMEEEIRELQRRYKTKRQPI) form a coiled coil.

This sequence belongs to the protein kinase superfamily. STE Ser/Thr protein kinase family. STE20 subfamily. Interacts with rsf-1 (via SARAH domain); the interaction is required for the phosphorylation of cst-1. Mg(2+) is required as a cofactor. In terms of processing, proteolytically cleaved by caspase-3 during apoptosis which results in kinase activation. Post-translationally, phosphorylated. In terms of tissue distribution, widely expressed in epidermal cells.

It catalyses the reaction L-seryl-[protein] + ATP = O-phospho-L-seryl-[protein] + ADP + H(+). It carries out the reaction L-threonyl-[protein] + ATP = O-phospho-L-threonyl-[protein] + ADP + H(+). Functionally, serine/threonine-protein kinase which extends lifespan and delays tissue aging, probably by activating daf-16. This chain is Serine/threonine-protein kinase cst-1, found in Caenorhabditis elegans.